Reading from the N-terminus, the 1047-residue chain is Jouberin (1047 aa).

Composition is skewed to basic and acidic residues over residues 1 to 17 (MEPETPEKVDSAQEKVR), 29 to 40 (SREKTGIEEKGE), and 77 to 86 (LLHDDKLASE). Disordered stretches follow at residues 1–40 (MEPETPEKVDSAQEKVRGKTPTADDSDDSREKTGIEEKGE) and 67–181 (EQLT…SRDS). The tract at residues 1 to 284 (MEPETPEKVD…IFNENFPYLL (284 aa)) is interaction with HAP1. The segment covering 96–106 (PVPTKPESSPS) has biased composition (low complexity). Positions 115–138 (GEQKKEGTPEDSQHMEGICSREQD) are enriched in basic and acidic residues. Basic residues predominate over residues 149–159 (PKPKKTKKKTK). The span at 172-181 (GVHEITSRDS) shows a compositional bias: basic and acidic residues. WD repeat units follow at residues 457–499 (AGER…FMRE), 502–541 (GHLNIIYDLDWSKDDRYLVTSSSDGTARVWKNEINSTSTF), 545–585 (PHPS…DAAI), 592–631 (VHKSFVNSICFDDEGHHMYSGDCIGVIVVWDTYVKVNDVQ), 648–687 (FRGVPISYLEVHPNGKRLLIHTKDSTLRIMDLRILAARKF), 691–730 (ANYREKIHSTLTPCGTLLFSGSEDGIVYVWNPETGEQVAM), and 735–776 (PFKS…AQQE). Residue serine 853 is modified to Phosphoserine. The SH3 domain maps to 902 to 962 (DPPPMVVALY…PANHVASETL (61 aa)). Composition is skewed to basic and acidic residues over residues 963-987 (YRDSPPKVKERSPPLTPKEKTKPEK) and 1013-1040 (HSEKGKDQNVEDRGHKVDMETKKSEPVV). Positions 963 to 1047 (YRDSPPKVKE…PVVRKVTLIE (85 aa)) are disordered. Serine 974 is subject to Phosphoserine.

In terms of assembly, self-associates. Part of the tectonic-like complex (also named B9 complex). Interacts with MKS1. Interacts with NPHP1; probably as heterodimers and/or AHI1(2):NPHP1(2) heterotetramers. Interacts (via SH3 domain) with the dynamin GTPase DNM2. Interacts with HAP1; probably as AHI1(2):HAP1(2) heterotetramers. Interacts with RAB8A. Interacts with CEND1. Interacts with SPATA7. In terms of tissue distribution, expressed in the retina (at protein level). Highly expressed in the brain. Highly expressed in the testis. Expressed in the kidney, thymus, heart, lung, spleen. Weakly expressed in the liver, stomach, pancreas, and embryo. Strongly expressed during periods of both cortical and cerebellar development.

The protein localises to the cytoplasm. The protein resides in the cytoskeleton. It is found in the cilium basal body. Its subcellular location is the microtubule organizing center. It localises to the centrosome. The protein localises to the centriole. The protein resides in the cell junction. It is found in the adherens junction. Involved in vesicle trafficking and required for ciliogenesis, formation of primary non-motile cilium, and recruitment of RAB8A to the basal body of primary cilium. Component of the tectonic-like complex, a complex localized at the transition zone of primary cilia and acting as a barrier that prevents diffusion of transmembrane proteins between the cilia and plasma membranes. Involved in neuronal differentiation. As a positive modulator of classical Wnt signaling, may play a crucial role in ciliary signaling during cerebellum embryonic development. This Mus musculus (Mouse) protein is Jouberin (Ahi1).